Consider the following 342-residue polypeptide: Nicotinate-nucleotide--dimethylbenzimidazole phosphoribosyltransferase (342 aa).

Catalysis depends on Glu311, which acts as the Proton acceptor.

It belongs to the CobT family.

It carries out the reaction 5,6-dimethylbenzimidazole + nicotinate beta-D-ribonucleotide = alpha-ribazole 5'-phosphate + nicotinate + H(+). The protein operates within nucleoside biosynthesis; alpha-ribazole biosynthesis; alpha-ribazole from 5,6-dimethylbenzimidazole: step 1/2. In terms of biological role, catalyzes the synthesis of alpha-ribazole-5'-phosphate from nicotinate mononucleotide (NAMN) and 5,6-dimethylbenzimidazole (DMB). This Shewanella piezotolerans (strain WP3 / JCM 13877) protein is Nicotinate-nucleotide--dimethylbenzimidazole phosphoribosyltransferase.